A 57-amino-acid chain; its full sequence is Aminopeptidase A (57 aa).

At 1 to 57 (YLTDHYFKVDLNSTVTQQRFLLDPSELAGITIMQPSDSNIEWLKQYRDDVATWLENS) the chain is on the extracellular side. The N-linked (GlcNAc...) asparagine glycan is linked to asparagine 12.

It belongs to the peptidase M1 family. As to quaternary structure, homodimer; disulfide-linked. Zn(2+) serves as cofactor.

The protein localises to the cell membrane. It carries out the reaction Release of N-terminal glutamate (and to a lesser extent aspartate) from a peptide.. Inhibited by the aminopeptidase competitive inhibitors amastatin (Leu and acidic inhibitor), and bestatin (Leu inhibitor), by chelating agents EDTA, and 1,10-Phenanthroline, as well as by Zn(2+) ions. Substrate specificity is modulated by Ca(2+), Ba(2+), and Mn(2+) ions which enhances the enzymatic activity for cleavage of acidic residues. Venom protein that cleaves N-terminal acidic residues from peptides with high potency in presence of calcium. It may have several roles in venom including alteration of blood pressure by cleaving circulating angiotensin-2, general degradation of host tissue, increase of permeability to other venom components, and/or processing of other toxins in the venom. The sequence is that of Aminopeptidase A from Gloydius blomhoffii (Mamushi).